Here is a 92-residue protein sequence, read N- to C-terminus: Small ribosomal subunit protein uS19 (92 aa).

This sequence belongs to the universal ribosomal protein uS19 family.

Functionally, protein S19 forms a complex with S13 that binds strongly to the 16S ribosomal RNA. The chain is Small ribosomal subunit protein uS19 from Azorhizobium caulinodans (strain ATCC 43989 / DSM 5975 / JCM 20966 / LMG 6465 / NBRC 14845 / NCIMB 13405 / ORS 571).